Here is a 655-residue protein sequence, read N- to C-terminus: p-hydroxybenzoic acid efflux pump subunit AaeB (655 aa).

Transmembrane regions (helical) follow at residues 13–33, 38–58, 69–89, 93–113, 121–141, 152–172, 370–390, 407–427, 431–451, 459–479, and 482–502; these read FAVK…HFQL, WAVL…GGEP, LRII…ISMI, LLMI…SSLV, WGLS…EPLL, EIVI…PRSI, LFWL…IAVV, FIYG…VIIP, QSML…GIEV, MGAL…TFHF, and FLDS…VILL.

It belongs to the aromatic acid exporter ArAE (TC 2.A.85) family.

It is found in the cell inner membrane. In terms of biological role, forms an efflux pump with AaeA. Could function as a metabolic relief valve, allowing to eliminate certain compounds when they accumulate to high levels in the cell. The protein is p-hydroxybenzoic acid efflux pump subunit AaeB of Salmonella heidelberg (strain SL476).